Reading from the N-terminus, the 192-residue chain is Small ribosomal subunit protein uS5 (192 aa).

The 64-residue stretch at 20 to 83 (FVDKLVHINR…EAAKRGLIRV (64 aa)) folds into the S5 DRBM domain. The disordered stretch occupies residues 162-192 (SVAARRGLKVSALQARRRDADPADTSDAAVA).

Belongs to the universal ribosomal protein uS5 family. In terms of assembly, part of the 30S ribosomal subunit. Contacts proteins S4 and S8.

Functionally, with S4 and S12 plays an important role in translational accuracy. Its function is as follows. Located at the back of the 30S subunit body where it stabilizes the conformation of the head with respect to the body. In Methylorubrum populi (strain ATCC BAA-705 / NCIMB 13946 / BJ001) (Methylobacterium populi), this protein is Small ribosomal subunit protein uS5.